The following is a 310-amino-acid chain: Very-long-chain enoyl-CoA reductase (310 aa).

The Cytoplasmic segment spans residues 1–85 (MPITIKSRSK…KDLGPQISWR (85 aa)). The helical transmembrane segment at 86-106 (LVFFCEYLGPVLVHSLFYYLS) threads the bilayer. Residues 107–141 (TIPTVVDRWHSASSDYNPFLNRVAYFLILGHYGKR) lie on the Lumenal side of the membrane. Residues 142 to 162 (LFETLFVHQFSLATMPIFNLF) form a helical membrane-spanning segment. Topologically, residues 163 to 165 (KNC) are cytoplasmic. A helical membrane pass occupies residues 166–186 (FHYWVLSGLISFGYFGYGFPF). Topologically, residues 187–201 (GNAKLFKYYSYLKLD) are lumenal. Residues 202 to 222 (DLSTLIGLFVLSELWNFYCHI) traverse the membrane as a helical segment. Topologically, residues 223–242 (KLRLWGDYQKKHGNAKIRVP) are cytoplasmic. The helical transmembrane segment at 243 to 265 (LNQGIFNLFVAPNYTFEVWSWIW) threads the bilayer. Residues 266–268 (FTF) lie on the Lumenal side of the membrane. A helical membrane pass occupies residues 269–291 (VFKFNLFAVLFLTVSTAQMYAWA). Over 292 to 310 (QKKNKKYHTRRAFLIPFVF) the chain is Cytoplasmic.

Belongs to the steroid 5-alpha reductase family. As to quaternary structure, interacts with the fatty acid elongation system components ELO2 and ELO3. Interacts with NVJ1.

The protein localises to the endoplasmic reticulum membrane. It carries out the reaction a very-long-chain 2,3-saturated fatty acyl-CoA + NADP(+) = a very-long-chain (2E)-enoyl-CoA + NADPH + H(+). The enzyme catalyses octadecanoyl-CoA + NADP(+) = (2E)-octadecenoyl-CoA + NADPH + H(+). The catalysed reaction is (2E)-eicosenoyl-CoA + NADPH + H(+) = eicosanoyl-CoA + NADP(+). It catalyses the reaction (2E)-docosenoyl-CoA + NADPH + H(+) = docosanoyl-CoA + NADP(+). It carries out the reaction (2E)-tetracosenoyl-CoA + NADPH + H(+) = tetracosanoyl-CoA + NADP(+). The enzyme catalyses (2E)-hexacosenoyl-CoA + NADPH + H(+) = hexacosanoyl-CoA + NADP(+). Its pathway is lipid metabolism; fatty acid biosynthesis. Catalyzes the last of the four reactions of the long-chain fatty acids elongation cycle. This endoplasmic reticulum-bound enzymatic process, allows the addition of 2 carbons to the chain of long- and very long-chain fatty acids/VLCFAs per cycle. This enzyme reduces the trans-2,3-enoyl-CoA fatty acid intermediate to an acyl-CoA that can be further elongated by entering a new cycle of elongation. Thereby, it participates in the production of VLCFAs of different chain lengths that are involved in multiple biological processes as precursors of membrane lipids and lipid mediators. VLCFAs serve for instance as precursors for ceramide and sphingolipids. Required for normal biogenesis of piecemeal microautophagy of the nucleus (PMN) bleps and vesicles during nutrient stress. The protein is Very-long-chain enoyl-CoA reductase (TSC13) of Saccharomyces cerevisiae (strain ATCC 204508 / S288c) (Baker's yeast).